The primary structure comprises 178 residues: Acireductone dioxygenase (178 aa).

Fe(2+) is bound by residues H82, H84, E88, and H127. Ni(2+) is bound by residues H82, H84, E88, and H127. A Phosphoserine modification is found at S157.

This sequence belongs to the acireductone dioxygenase (ARD) family. Fe(2+) is required as a cofactor. Ni(2+) serves as cofactor.

It localises to the cytoplasm. Its subcellular location is the nucleus. It carries out the reaction 1,2-dihydroxy-5-(methylsulfanyl)pent-1-en-3-one + O2 = 4-methylsulfanyl-2-oxobutanoate + formate + 2 H(+). The catalysed reaction is 1,2-dihydroxy-5-(methylsulfanyl)pent-1-en-3-one + O2 = 3-(methylsulfanyl)propanoate + CO + formate + 2 H(+). Its pathway is amino-acid biosynthesis; L-methionine biosynthesis via salvage pathway; L-methionine from S-methyl-5-thio-alpha-D-ribose 1-phosphate: step 5/6. Its function is as follows. Catalyzes 2 different reactions between oxygen and the acireductone 1,2-dihydroxy-3-keto-5-methylthiopentene (DHK-MTPene) depending upon the metal bound in the active site. Fe-containing acireductone dioxygenase (Fe-ARD) produces formate and 2-keto-4-methylthiobutyrate (KMTB), the alpha-ketoacid precursor of methionine in the methionine recycle pathway. Ni-containing acireductone dioxygenase (Ni-ARD) produces methylthiopropionate, carbon monoxide and formate, and does not lie on the methionine recycle pathway. This Schizosaccharomyces pombe (strain 972 / ATCC 24843) (Fission yeast) protein is Acireductone dioxygenase (adi1).